The sequence spans 319 residues: Annexin A4 (319 aa).

Ala2 bears the N-acetylalanine mark. The residue at position 7 (Thr7) is a Phosphothreonine. Ser12 is subject to Phosphoserine. Annexin repeat units follow at residues 14-85 (FSAT…GMIT), 86-157 (PTVL…SLSA), 169-241 (ALMR…AIVK), and 245-316 (NKSA…ILCG). N6-acetyllysine is present on residues Lys213, Lys293, and Lys300.

The protein belongs to the annexin family. As to expression, expressed in pancreas (at protein level). Also detected in liver, spleen, intestine, stomach, kidney, and adrenal glands.

The protein resides in the zymogen granule membrane. In terms of biological role, calcium/phospholipid-binding protein which promotes membrane fusion and is involved in exocytosis. The sequence is that of Annexin A4 (ANXA4) from Canis lupus familiaris (Dog).